We begin with the raw amino-acid sequence, 133 residues long: MGRVRTKTVKKAAKIIIEKYYTRLTLDFDTNKRICEEIAIIPTKPLRNKIAGFATHLMRRLRHSQVRGISIKLQEEERERRDNYVPEVSALEHDIIEVDPDTKDMLKMLDFNNINGLQLTQPATQGGYGGRRN.

Belongs to the eukaryotic ribosomal protein eS17 family.

The polypeptide is Small ribosomal subunit protein eS17 (RpS17) (Spodoptera frugiperda (Fall armyworm)).